A 383-amino-acid chain; its full sequence is Lipid-A-disaccharide synthase (383 aa).

Belongs to the LpxB family.

The catalysed reaction is a lipid X + a UDP-2-N,3-O-bis[(3R)-3-hydroxyacyl]-alpha-D-glucosamine = a lipid A disaccharide + UDP + H(+). It participates in bacterial outer membrane biogenesis; LPS lipid A biosynthesis. In terms of biological role, condensation of UDP-2,3-diacylglucosamine and 2,3-diacylglucosamine-1-phosphate to form lipid A disaccharide, a precursor of lipid A, a phosphorylated glycolipid that anchors the lipopolysaccharide to the outer membrane of the cell. The chain is Lipid-A-disaccharide synthase from Myxococcus xanthus (strain DK1622).